The primary structure comprises 303 residues: Signal recognition particle receptor FtsY (303 aa).

Residues G108–T115, D190–R194, and T254–D257 each bind GTP.

It belongs to the GTP-binding SRP family. FtsY subfamily. In terms of assembly, part of the signal recognition particle protein translocation system, which is composed of SRP and FtsY. SRP is a ribonucleoprotein composed of Ffh and a 4.5S RNA molecule.

Its subcellular location is the cell inner membrane. It is found in the cytoplasm. It catalyses the reaction GTP + H2O = GDP + phosphate + H(+). Functionally, involved in targeting and insertion of nascent membrane proteins into the cytoplasmic membrane. Acts as a receptor for the complex formed by the signal recognition particle (SRP) and the ribosome-nascent chain (RNC). Interaction with SRP-RNC leads to the transfer of the RNC complex to the Sec translocase for insertion into the membrane, the hydrolysis of GTP by both Ffh and FtsY, and the dissociation of the SRP-FtsY complex into the individual components. The protein is Signal recognition particle receptor FtsY of Rickettsia prowazekii (strain Madrid E).